The sequence spans 116 residues: UPF0654 protein C869.09 (116 aa).

A disordered region spans residues 32-116 (LKEHGSESHY…LLEEVDDESK (85 aa)). Over residues 39-48 (SHYTTGTTRG) the composition is skewed to polar residues. Positions 49–64 (QKADADDAGELREEGF) are enriched in basic and acidic residues.

This sequence belongs to the UPF0654 (con-6) family.

Its subcellular location is the cytoplasm. It localises to the nucleus. This Schizosaccharomyces pombe (strain 972 / ATCC 24843) (Fission yeast) protein is UPF0654 protein C869.09.